A 255-amino-acid polypeptide reads, in one-letter code: tRNA (guanine-N(1)-)-methyltransferase (255 aa).

S-adenosyl-L-methionine is bound by residues Gly-113 and 133–138 (IGDYVL).

Belongs to the RNA methyltransferase TrmD family. As to quaternary structure, homodimer.

The protein resides in the cytoplasm. It catalyses the reaction guanosine(37) in tRNA + S-adenosyl-L-methionine = N(1)-methylguanosine(37) in tRNA + S-adenosyl-L-homocysteine + H(+). Its function is as follows. Specifically methylates guanosine-37 in various tRNAs. This Escherichia coli O81 (strain ED1a) protein is tRNA (guanine-N(1)-)-methyltransferase.